The following is a 209-amino-acid chain: Ubiquitin-conjugating enzyme E2 S (209 aa).

Residues 14–160 (QTIRQVMREL…ARMMTEIHAQ (147 aa)) form the UBC core domain. Cysteine 98 serves as the catalytic Glycyl thioester intermediate. Residues 165-194 (GVGAASDAKDDDGPSTKKHAGLDKKLQDKK) form a disordered region. Residues 171 to 194 (DAKDDDGPSTKKHAGLDKKLQDKK) are compositionally biased toward basic and acidic residues.

It belongs to the ubiquitin-conjugating enzyme family.

It carries out the reaction S-ubiquitinyl-[E1 ubiquitin-activating enzyme]-L-cysteine + [E2 ubiquitin-conjugating enzyme]-L-cysteine = [E1 ubiquitin-activating enzyme]-L-cysteine + S-ubiquitinyl-[E2 ubiquitin-conjugating enzyme]-L-cysteine.. It participates in protein modification; protein ubiquitination. Its function is as follows. Catalyzes the covalent attachment of ubiquitin to other proteins. Acts as an essential factor of the anaphase promoting complex/cyclosome (APC/C), a cell cycle-regulated ubiquitin ligase that controls progression through mitosis. Acts by specifically elongating polyubiquitin chains initiated by the E2 enzyme vih/UbcH10 on APC/C substrates, enhancing the degradation of APC/C substrates by the proteasome and promoting mitotic exit. The polypeptide is Ubiquitin-conjugating enzyme E2 S (Drosophila persimilis (Fruit fly)).